We begin with the raw amino-acid sequence, 325 residues long: Diacylglycerol acyltransferase/mycolyltransferase Ag85B (325 aa).

An N-terminal signal peptide occupies residues 1–40 (MTDVSGKIRAWGRRLLVGAAAAAALPGLVGLAGGAATAGA). 82–83 (LR) is a substrate binding site. The interval 98–108 (FEWYYQSGLSV) is fibronectin-binding. Cysteine 127 and cysteine 132 form a disulfide bridge. Positions 166 and 194 each coordinate substrate. Residue serine 166 is the Nucleophile of the active site. Glutamate 270 is an active-site residue. Substrate-binding positions include 272–275 (FVRS), lysine 279, and 302–304 (HSW). The active site involves histidine 302.

It belongs to the mycobacterial A85 antigen family.

It localises to the secreted. It catalyses the reaction 2 alpha,alpha'-trehalose 6-mycolate = alpha,alpha'-trehalose 6,6'-bismycolate + alpha,alpha-trehalose. The catalysed reaction is an acyl-CoA + a 1,2-diacyl-sn-glycerol = a triacyl-sn-glycerol + CoA. Its function is as follows. The antigen 85 proteins (FbpA, FbpB, FbpC) are responsible for the high affinity of mycobacteria for fibronectin, a large adhesive glycoprotein, which facilitates the attachment of M.tuberculosis to murine alveolar macrophages (AMs). They also help to maintain the integrity of the cell wall by catalyzing the transfer of mycolic acids to cell wall arabinogalactan and through the synthesis of alpha,alpha-trehalose dimycolate (TDM, cord factor). They catalyze the transfer of a mycoloyl residue from one molecule of alpha,alpha-trehalose monomycolate (TMM) to another TMM, leading to the formation of TDM. The polypeptide is Diacylglycerol acyltransferase/mycolyltransferase Ag85B (fbpB) (Mycobacterium kansasii).